The primary structure comprises 242 residues: uncharacterized protein (242 aa).

2 disordered regions span residues 43 to 70 (SRRS…TSKD) and 112 to 162 (RMSR…VTPR). Polar residues predominate over residues 58 to 70 (QSVSGRKNSTSKD). Composition is skewed to low complexity over residues 122–139 (ERAA…AGHA) and 147–162 (ADGA…VTPR).

This is an uncharacterized protein from Homo sapiens (Human).